The chain runs to 348 residues: Erythronate-4-phosphate dehydrogenase (348 aa).

The substrate site is built by threonine 46 and threonine 67. NAD(+) is bound at residue aspartate 147. Arginine 209 is an active-site residue. Aspartate 233 contacts NAD(+). Glutamate 238 is an active-site residue. The Proton donor role is filled by histidine 255. Glycine 258 contributes to the NAD(+) binding site. Tyrosine 259 is a binding site for substrate.

Belongs to the D-isomer specific 2-hydroxyacid dehydrogenase family. PdxB subfamily. As to quaternary structure, homodimer.

The protein localises to the cytoplasm. It carries out the reaction 4-phospho-D-erythronate + NAD(+) = (R)-3-hydroxy-2-oxo-4-phosphooxybutanoate + NADH + H(+). It functions in the pathway cofactor biosynthesis; pyridoxine 5'-phosphate biosynthesis; pyridoxine 5'-phosphate from D-erythrose 4-phosphate: step 2/5. Its function is as follows. Catalyzes the oxidation of erythronate-4-phosphate to 3-hydroxy-2-oxo-4-phosphonooxybutanoate. The chain is Erythronate-4-phosphate dehydrogenase from Bacteroides thetaiotaomicron (strain ATCC 29148 / DSM 2079 / JCM 5827 / CCUG 10774 / NCTC 10582 / VPI-5482 / E50).